Consider the following 632-residue polypeptide: Probable electron transfer flavoprotein-ubiquinone oxidoreductase, mitochondrial (632 aa).

93–107 (VCIVGAGPAGLSAAI) provides a ligand contact to FAD. Residues Cys-575, Cys-601, Cys-604, and Cys-607 each contribute to the [4Fe-4S] cluster site. In terms of domain architecture, 4Fe-4S ferredoxin-type spans 592–621 (KRFVINSQNCVHCKTCDIKDPLQGIQWKTP).

Belongs to the ETF-QO/FixC family. The cofactor is [4Fe-4S] cluster. FAD serves as cofactor.

The protein localises to the mitochondrion inner membrane. The catalysed reaction is a ubiquinone + reduced [electron-transfer flavoprotein] = a ubiquinol + oxidized [electron-transfer flavoprotein] + H(+). Functionally, accepts electrons from ETF and reduces ubiquinone. The chain is Probable electron transfer flavoprotein-ubiquinone oxidoreductase, mitochondrial from Schizosaccharomyces pombe (strain 972 / ATCC 24843) (Fission yeast).